The chain runs to 121 residues: Large ribosomal subunit protein bL12 (121 aa).

This sequence belongs to the bacterial ribosomal protein bL12 family. In terms of assembly, homodimer. Part of the ribosomal stalk of the 50S ribosomal subunit. Forms a multimeric L10(L12)X complex, where L10 forms an elongated spine to which 2 to 4 L12 dimers bind in a sequential fashion. Binds GTP-bound translation factors.

Functionally, forms part of the ribosomal stalk which helps the ribosome interact with GTP-bound translation factors. Is thus essential for accurate translation. The chain is Large ribosomal subunit protein bL12 from Streptococcus equi subsp. equi (strain 4047).